We begin with the raw amino-acid sequence, 260 residues long: Snake venom serine protease homolog (260 aa).

Residues 1–18 form the signal peptide; it reads MVLVRVLANLLMLQLSYA. The propeptide occupies 19-24; it reads QKSSEL. Residues 25–251 form the Peptidase S1 domain; it reads IIGGDECNIN…HLDWIKSIIA (227 aa). Disulfide bonds link cysteine 31/cysteine 165, cysteine 52/cysteine 68, cysteine 100/cysteine 258, cysteine 144/cysteine 212, cysteine 176/cysteine 191, and cysteine 202/cysteine 227. The active-site Charge relay system is aspartate 112. Residues asparagine 123 and asparagine 124 are each glycosylated (N-linked (GlcNAc...) asparagine). Serine 206 serves as the catalytic Charge relay system.

It belongs to the peptidase S1 family. Snake venom subfamily. Expressed by the venom gland.

It localises to the secreted. In terms of biological role, snake venom serine protease homolog. May act in the hemostasis system of the prey. The sequence is that of Snake venom serine protease homolog from Protobothrops jerdonii (Jerdon's pitviper).